Reading from the N-terminus, the 141-residue chain is Large ribosomal subunit protein uL11 (141 aa).

This sequence belongs to the universal ribosomal protein uL11 family. In terms of assembly, part of the ribosomal stalk of the 50S ribosomal subunit. Interacts with L10 and the large rRNA to form the base of the stalk. L10 forms an elongated spine to which L12 dimers bind in a sequential fashion forming a multimeric L10(L12)X complex. One or more lysine residues are methylated.

Functionally, forms part of the ribosomal stalk which helps the ribosome interact with GTP-bound translation factors. This is Large ribosomal subunit protein uL11 from Acaryochloris marina (strain MBIC 11017).